A 287-amino-acid chain; its full sequence is Bifunctional protein FolD (287 aa).

NADP(+) contacts are provided by residues 164-166 (GSS), Ser189, and Ile230.

The protein belongs to the tetrahydrofolate dehydrogenase/cyclohydrolase family. In terms of assembly, homodimer.

It catalyses the reaction (6R)-5,10-methylene-5,6,7,8-tetrahydrofolate + NADP(+) = (6R)-5,10-methenyltetrahydrofolate + NADPH. It carries out the reaction (6R)-5,10-methenyltetrahydrofolate + H2O = (6R)-10-formyltetrahydrofolate + H(+). It participates in one-carbon metabolism; tetrahydrofolate interconversion. Catalyzes the oxidation of 5,10-methylenetetrahydrofolate to 5,10-methenyltetrahydrofolate and then the hydrolysis of 5,10-methenyltetrahydrofolate to 10-formyltetrahydrofolate. In Aliarcobacter butzleri (strain RM4018) (Arcobacter butzleri), this protein is Bifunctional protein FolD.